Here is a 326-residue protein sequence, read N- to C-terminus: MNTPTATLNAPAADAESAAASAADKKAAFELNKLSKRLHRQVGQAITDFNMIQEGDRVMVCLSGGKDSYGMLDILLGLQQRAPITFSIVAVNLDQKQPGFPEHILPAYLKARGVEFHIENQDTYSIVKRVIPEGKTMCSLCSRLRRGILYRVADELGATKIALGHHRDDFLGTVFLNMFFGSKLKGMPPKLVSDDGRHTVIRPLAYVAETDLERWAEHRAFPIIPCTLCGTQDNLQRVQIKHMLRDWDQRFPGRIDNMHRAFSQVVPSHLMDRALFPFETLVPTGVADPAGDRAFDEDDSELCAPSGSADAAGDEVSVPVALIRRV.

The short motif at 63 to 68 (SGGKDS) is the PP-loop motif element. [4Fe-4S] cluster contacts are provided by Cys-138, Cys-141, and Cys-229.

This sequence belongs to the TtcA family. Homodimer. Requires Mg(2+) as cofactor. [4Fe-4S] cluster serves as cofactor.

Its subcellular location is the cytoplasm. It catalyses the reaction cytidine(32) in tRNA + S-sulfanyl-L-cysteinyl-[cysteine desulfurase] + AH2 + ATP = 2-thiocytidine(32) in tRNA + L-cysteinyl-[cysteine desulfurase] + A + AMP + diphosphate + H(+). The protein operates within tRNA modification. In terms of biological role, catalyzes the ATP-dependent 2-thiolation of cytidine in position 32 of tRNA, to form 2-thiocytidine (s(2)C32). The sulfur atoms are provided by the cysteine/cysteine desulfurase (IscS) system. The protein is tRNA-cytidine(32) 2-sulfurtransferase of Leptothrix cholodnii (strain ATCC 51168 / LMG 8142 / SP-6) (Leptothrix discophora (strain SP-6)).